The following is a 167-amino-acid chain: Leptin (167 aa).

Residues 1-21 form the signal peptide; the sequence is MYWRTLWGFLWLWPYLFYIQA. Residues cysteine 117 and cysteine 167 are joined by a disulfide bond.

Belongs to the leptin family.

It localises to the secreted. Its function is as follows. Key player in the regulation of energy balance and body weight control. Once released into the circulation, has central and peripheral effects by binding LEPR, found in many tissues, which results in the activation of several major signaling pathways. In the hypothalamus, acts as an appetite-regulating factor that induces a decrease in food intake and an increase in energy consumption by inducing anorexinogenic factors and suppressing orexigenic neuropeptides, also regulates bone mass and secretion of hypothalamo-pituitary-adrenal hormones. In the periphery, increases basal metabolism, influences reproductive function, regulates pancreatic beta-cell function and insulin secretion, is pro-angiogenic for endothelial cell and affects innate and adaptive immunity. In the arcuate nucleus of the hypothalamus, activates by depolarization POMC neurons inducing FOS and SOCS3 expression to release anorexigenic peptides and inhibits by hyperpolarization NPY neurons inducing SOCS3 with a consequent reduction on release of orexigenic peptides. In addition to its known satiety inducing effect, has a modulatory role in nutrient absorption. In the intestine, reduces glucose absorption by enterocytes by activating PKC and leading to a sequential activation of p38, PI3K and ERK signaling pathways which exerts an inhibitory effect on glucose absorption. Acts as a growth factor on certain tissues, through the activation of different signaling pathways increases expression of genes involved in cell cycle regulation such as CCND1, via JAK2-STAT3 pathway, or VEGFA, via MAPK1/3 and PI3K-AKT1 pathways. May also play an apoptotic role via JAK2-STAT3 pathway and up-regulation of BIRC5 expression. Pro-angiogenic, has mitogenic activity on vascular endothelial cells and plays a role in matrix remodeling by regulating the expression of matrix metalloproteinases (MMPs) and tissue inhibitors of metalloproteinases (TIMPs). In innate immunity, modulates the activity and function of neutrophils by increasing chemotaxis and the secretion of oxygen radicals. Increases phagocytosis by macrophages and enhances secretion of pro-inflammatory mediators. Increases cytotoxic ability of NK cells. Plays a pro-inflammatory role, in synergy with IL1B, by inducing NOS2 which promotes the production of IL6, IL8 and Prostaglandin E2, through a signaling pathway that involves JAK2, PI3K, MAP2K1/MEK1 and MAPK14/p38. In adaptive immunity, promotes the switch of memory T-cells towards T helper-1 cell immune responses. Increases CD4(+)CD25(-) T-cell proliferation and reduces autophagy during TCR (T-cell receptor) stimulation, through MTOR signaling pathway activation and BCL2 up-regulation. This chain is Leptin (LEP), found in Macaca mulatta (Rhesus macaque).